A 236-amino-acid polypeptide reads, in one-letter code: Increased recombination centers protein 22-2 (236 aa).

A signal peptide spans 1–19 (MKFSAILTALTATIATVAG). The Lumenal portion of the chain corresponds to 20 to 161 (YETSGKPHTV…AAVSFFDPRL (142 aa)). A helical membrane pass occupies residues 162–182 (IFLELVLLATFGGIAYFVYEI). Topologically, residues 183–236 (WGKQYLRGTAPVKVPVKKSGSPVAVKEASPVGSASGFDESWIPEAHLKKNKKKA) are cytoplasmic.

It belongs to the IRC22 family.

The protein resides in the endoplasmic reticulum membrane. Its function is as follows. Is probably involved in a pathway contributing to genomic integrity. This is Increased recombination centers protein 22-2 (IRC22-2) from Candida tropicalis (strain ATCC MYA-3404 / T1) (Yeast).